The primary structure comprises 306 residues: Pantothenate kinase (306 aa).

An ATP-binding site is contributed by 91-98 (GSVAVGKS).

It belongs to the prokaryotic pantothenate kinase family.

It is found in the cytoplasm. It carries out the reaction (R)-pantothenate + ATP = (R)-4'-phosphopantothenate + ADP + H(+). The protein operates within cofactor biosynthesis; coenzyme A biosynthesis; CoA from (R)-pantothenate: step 1/5. This chain is Pantothenate kinase (coaA), found in Streptococcus pyogenes serotype M3 (strain ATCC BAA-595 / MGAS315).